We begin with the raw amino-acid sequence, 1738 residues long: Sodium leak channel NALCN (1738 aa).

Residues 1–36 lie on the Cytoplasmic side of the membrane; that stretch reads MLKRKQSSRVEAQPVTDFGPDESLSDNADILWINKP. A helical membrane pass occupies residues 37-57; the sequence is WVHSLLRICAIISVISVCMNT. The Extracellular segment spans residues 58 to 65; that stretch reads PMTFEHYP. The chain crosses the membrane as a helical span at residues 66 to 90; the sequence is PLQYVTFTLDTLLMFLYTAEMIAKM. At 91–106 the chain is on the cytoplasmic side; it reads HIRGIVKGDSSYVKDR. The helical transmembrane segment at 107 to 129 threads the bilayer; sequence WCVFDGFMVFCLWVSLVLQVFEI. At 130–137 the chain is on the extracellular side; it reads ADIVDQMS. A helical; Voltage-sensor transmembrane segment spans residues 138-158; that stretch reads PWGMLRIPRPLIMIRAFRIYF. At 159–173 the chain is on the cytoplasmic side; sequence RFELPRTRITNILKR. A helical membrane pass occupies residues 174–199; that stretch reads SGEQIWSVSIFLLFFLLLYGILGVQM. Over 200–269 the chain is Extracellular; it reads FGTFTYHCVV…YSGFNEIGTS (70 aa). Cystine bridges form between Cys-207–Cys-239 and Cys-229–Cys-245. Asn-210 and Asn-216 each carry an N-linked (GlcNAc...) asparagine glycan. Residues 270–289 constitute an intramembrane region (pore-forming); it reads IFTVYEASSQEGWVFLMYRA. Topologically, residues 290–294 are extracellular; the sequence is IDSFP. The chain crosses the membrane as a helical span at residues 295 to 322; that stretch reads RWRSYFYFITLIFFLAWLVKNVFIAVII. The Cytoplasmic segment spans residues 323–382; sequence ETFAEIRVQFQQMWGTRSSTTSTATTQMFHEDAAGGWQLVAVDVNKPQGRAPACLQKMMR. The helical transmembrane segment at 383-403 threads the bilayer; that stretch reads SSVFHMFILSMVTVDVIVAAS. The Extracellular portion of the chain corresponds to 404 to 416; it reads NYYKGENFRRQYD. Residues 417–439 traverse the membrane as a helical segment; it reads EFYLAEVAFTVLFDLEALLKIWC. The Cytoplasmic segment spans residues 440–447; it reads LGFTGYIS. The helical transmembrane segment at 448–468 threads the bilayer; sequence SSLHKFELLLVIGTTLHVYPD. Topologically, residues 469–472 are extracellular; that stretch reads LYHS. The chain crosses the membrane as a helical; Voltage-sensor span at residues 473-492; that stretch reads QFTYFQVLRVVRLIKISPAL. Over 493-502 the chain is Cytoplasmic; sequence EDFVYKIFGP. A helical transmembrane segment spans residues 503-530; it reads GKKLGSLVVFTASLLIVMSAISLQMFCF. The Extracellular portion of the chain corresponds to 531–543; it reads VEELDRFTTFPRA. The segment at residues 544 to 563 is an intramembrane region (pore-forming); sequence FMSMFQILTQEGWVDVMDQT. Over 564–578 the chain is Extracellular; that stretch reads LNAVGHMWAPLVAIY. A helical membrane pass occupies residues 579-599; it reads FILYHLFATLILLSLFVAVIL. Residues 600–886 lie on the Cytoplasmic side of the membrane; that stretch reads DNLELDEDLK…QLYDLLGLVT (287 aa). Positions 762–785 are disordered; sequence QERRSLRHGSNSQRISRGKSLETL. Residues 795–830 adopt a coiled-coil conformation; it reads YRNAQREDSEIKMIQEKKEQAEMKRKVQEEELRENH. Residues 887–906 traverse the membrane as a helical segment; the sequence is YLDWVMITVTICSCISMMFE. Topologically, residues 907-915 are extracellular; it reads SPFRRVMHA. A helical transmembrane segment spans residues 916-939; that stretch reads PTLQIAEYVFVIFMSIELNLKIMA. Over 940–947 the chain is Cytoplasmic; sequence DGLFFTPT. Residues 948 to 972 form a helical membrane-spanning segment; that stretch reads AVIRDFGGVMDIFIYLVSLIFLCWM. Topologically, residues 973–980 are extracellular; that stretch reads PQNVPAES. The helical; Voltage-sensor transmembrane segment at 981–1003 threads the bilayer; that stretch reads GAQLLMVLRCLRPLRIFKLVPQM. At 1004-1015 the chain is on the cytoplasmic side; that stretch reads RKVVRELFSGFK. A helical membrane pass occupies residues 1016 to 1039; that stretch reads EIFLVSILLLTLMLVFASFGVQLF. Over 1040-1104 the chain is Extracellular; it reads AGKLAKCNDP…NFNFDNVGNA (65 aa). A disulfide bond links Cys-1046 and Cys-1057. Residue Asn-1064 is glycosylated (N-linked (GlcNAc...) asparagine). Positions 1105–1124 form an intramembrane region, pore-forming; sequence MLALFEVLSLKGWVEVRDVI. Topologically, residues 1125–1129 are extracellular; the sequence is IHRVG. The chain crosses the membrane as a helical span at residues 1130–1159; the sequence is PIHGIYIHVFVFLGCMIGLTLFVGVVIANF. Over 1160-1210 the chain is Cytoplasmic; that stretch reads NENKGTALLTVDQRRWEDLKSRLKIAQPLHLPPRPDNDGFRAKMYDITQHP. The chain crosses the membrane as a helical span at residues 1211 to 1227; it reads FFKRTIALLVLAQSVLL. At 1228–1236 the chain is on the extracellular side; the sequence is SVKWDVDDP. A helical membrane pass occupies residues 1237–1260; sequence VTVPLATMSVVFTFIFVLEVTMKI. Topologically, residues 1261–1271 are cytoplasmic; the sequence is IAMSPAGFWQS. Residues 1272 to 1293 traverse the membrane as a helical segment; that stretch reads RRNRYDLLVTSLGVVWVVLHFA. Residues 1294-1296 are Extracellular-facing; sequence LLN. A helical; Voltage-sensor membrane pass occupies residues 1297 to 1318; sequence AYTYMMGACVIVFRFFSICGKH. The Cytoplasmic portion of the chain corresponds to 1319 to 1331; it reads VTLKMLLLTVVVS. The helical transmembrane segment at 1332–1357 threads the bilayer; sequence MYKSFFIIVGMFLLLLCYAFAGVVLF. Residues 1358-1378 are Extracellular-facing; that stretch reads GTVKYGENINRHANFSSAGKA. The pore-forming intramembrane region spans 1379 to 1398; it reads ITVLFRIVTGEDWNKIMHDC. At 1399 to 1420 the chain is on the extracellular side; that stretch reads MVQPPFCTPDEFTYWATDCGNY. An intrachain disulfide couples Cys-1405 to Cys-1417. The helical transmembrane segment at 1421 to 1447 threads the bilayer; that stretch reads AGALMYFCSFYVIIAYIMLNLLVAIIV. The Cytoplasmic segment spans residues 1448–1738; it reads ENFSLFYSTE…DESGDDLLDI (291 aa). The tract at residues 1602–1679 is disordered; it reads EQERSRFLNP…WRLPSAPKPI (78 aa). Polar residues predominate over residues 1613–1631; sequence SIETTQPSEDSNANSQDHS. The span at 1633-1648 shows a compositional bias: low complexity; sequence QPETSSQQQLLSPTLS.

The protein belongs to the NALCN family. As to quaternary structure, found in a complex with NALCN, UNC79, UNC80 and NACL1; these auxiliary subunits are indispensable for the function of the NALCN channel. Interacts with UNC80; required for the NALCN activation/inhibition by GPCRs in neurons. Found in a complex with NALCN, UNC79 and UNC80; UNC80 bridges NALCN to UNC79. Interacts with CHRM3. Phosphorylated on tyrosine residues. In terms of tissue distribution, widely expressed in the brain and spinal cord neurons. Expressed also in pancreatic islet cells.

The protein resides in the cell membrane. It catalyses the reaction Na(+)(in) = Na(+)(out). Its activity is regulated as follows. Inhibited by low micromolar concentrations of Gd(3+) and high micromolar concentrations of verapamil. Insensitive to tetrodotoxin (TTX) and potentiated by low external Ca(2+) concentration. Its function is as follows. Voltage-gated ion channel responsible for the resting Na(+) permeability that controls neuronal excitability. NALCN channel functions as a multi-protein complex, which consists at least of NALCN, NALF1, UNC79 and UNC80. NALCN is the voltage-sensing, pore-forming subunit of the NALCN channel complex. NALCN channel complex is constitutively active and conducts monovalent cations but is blocked by physiological concentrations of extracellular divalent cations. In addition to its role in regulating neuronal excitability, is required for normal respiratory rhythm, systemic osmoregulation by controlling the serum sodium concentration and in the regulation of the intestinal pace-making activity in the interstitial cells of Cajal. Plays a critical role in both maintenance of spontaneous firing of substantia nigra pars reticulata (SNr) neurons and physiological modulation of SNr neuron excitability. NALCN channel is also activated by neuropeptides such as neurotensin and substance P (SP) through a SRC family kinases-dependent pathway. In addition, NALCN activity is enhanced/modulated by several GPCRs, such as CHRM3. The protein is Sodium leak channel NALCN (Nalcn) of Mus musculus (Mouse).